A 582-amino-acid chain; its full sequence is Solute carrier family 15 member 3 (582 aa).

Residues 1-20 form a disordered region; that stretch reads MSALRAEQQPSRSGERQPLV. Helical transmembrane passes span 33-53, 77-97, 102-122, and 155-175; these read TAAA…FGVT, LLFL…ADVY, LAIS…LTTI, and PYCA…ASSV. N-linked (GlcNAc...) asparagine glycosylation occurs at asparagine 178. The helical transmembrane segment at 201–221 threads the bilayer; the sequence is WFYWSINLGAILSLLVVAFIE. A glycan (N-linked (GlcNAc...) asparagine) is linked at asparagine 223. The next 2 membrane-spanning stretches (helical) occupy residues 232–252 and 312–332; these read IIVG…PVFI and FQVL…WMVY. An N-linked (GlcNAc...) asparagine glycan is attached at asparagine 357. Transmembrane regions (helical) follow at residues 371-391 and 409-429; these read IPEA…VPVK and LQKM…AGVL. Asparagine 440 carries an N-linked (GlcNAc...) asparagine glycan. The next 3 membrane-spanning stretches (helical) occupy residues 466–485, 498–518, and 541–561; these read YLLI…EFAY, GIFF…VALL, and LYFF…LWIA. A glycan (N-linked (GlcNAc...) asparagine) is linked at asparagine 575.

This sequence belongs to the major facilitator superfamily. Proton-dependent oligopeptide transporter (POT/PTR) (TC 2.A.17) family. Abundant expression in lung, spleen and thymus, and detected faintly in brain, liver, adrenal gland and heart at protein level.

It localises to the lysosome membrane. The protein resides in the endosome membrane. It catalyses the reaction N-acetyl-D-muramoyl-L-alanyl-D-isoglutamine(out) + n H(+)(out) = N-acetyl-D-muramoyl-L-alanyl-D-isoglutamine(in) + n H(+)(in). The catalysed reaction is glycylglycylglycine(out) + n H(+)(out) = glycylglycylglycine(in) + n H(+)(in). The enzyme catalyses carnosine(out) + n H(+)(out) = carnosine(in) + n H(+)(in). It carries out the reaction L-histidine(out) + n H(+)(out) = L-histidine(in) + n H(+)(in). In terms of biological role, proton-coupled amino-acid transporter that transports free histidine and certain di- and tripeptides, and is involved in innate immune response. Also able to transport carnosine. Involved in the detection of microbial pathogens by toll-like receptors (TLRs) and NOD-like receptors (NLRs), probably by mediating transport of bacterial peptidoglycans across the endolysosomal membrane: catalyzes the transport of certain bacterial peptidoglycans, such as muramyl dipeptide (MDP), the NOD2 ligand. The chain is Solute carrier family 15 member 3 (Slc15a3) from Rattus norvegicus (Rat).